The sequence spans 133 residues: Cytochrome c-554 (133 aa).

At Q1 the chain carries Pyrrolidone carboxylic acid. 4 residues coordinate heme c: M17, C122, C125, and H126.

In terms of processing, binds 1 heme c group covalently per subunit.

The protein resides in the periplasm. In terms of biological role, monoheme c-type cytochrome, that is particularly expressed when cells generate energy via aerobic respiration. The sequence is that of Cytochrome c-554 (cycF) from Cereibacter sphaeroides (Rhodobacter sphaeroides).